The chain runs to 554 residues: Asparagine synthetase B [glutamine-hydrolyzing] (554 aa).

The active-site For GATase activity is the Cys2. Residues 2–186 (CSIFGVFDIK…AGSYLWSQDG (185 aa)) form the Glutamine amidotransferase type-2 domain. L-glutamine is bound by residues 50-54 (RLSIV), 75-77 (NGE), and Asp99. ATP-binding positions include Leu233, Val273, and 347-348 (SG).

Belongs to the asparagine synthetase family. As to quaternary structure, homodimer.

It carries out the reaction L-aspartate + L-glutamine + ATP + H2O = L-asparagine + L-glutamate + AMP + diphosphate + H(+). It participates in amino-acid biosynthesis; L-asparagine biosynthesis; L-asparagine from L-aspartate (L-Gln route): step 1/1. Glutamine-dependent asparagine synthesis activity can be inhibited by aspartic acid analogs (such as a sulfinate derivative and (2S,3R)-2-amino-3-methylsuccinate) in vitro; the inhibition is competitive with respect to aspartate. In terms of biological role, catalyzes the ATP-dependent conversion of aspartate into asparagine, using glutamine as a source of nitrogen. Can also use ammonia as the nitrogen source in vitro, albeit with lower efficiency. As nucleotide substrates, ATP and dATP are utilized at a similar rate in both the glutamine- and ammonia-dependent reactions, whereas GTP utilization is only 15% that of ATP, and CTP, UTP, ITP and XTP are very poor or not substrates. Also exhibits glutaminase activity. The chain is Asparagine synthetase B [glutamine-hydrolyzing] (asnB) from Escherichia coli (strain K12).